We begin with the raw amino-acid sequence, 73 residues long: uncharacterized protein (73 aa).

This is an uncharacterized protein from Dictyostelium discoideum (Social amoeba).